The chain runs to 122 residues: Large ribosomal subunit protein uL14c (122 aa).

This sequence belongs to the universal ribosomal protein uL14 family. In terms of assembly, part of the 50S ribosomal subunit.

It localises to the plastid. It is found in the chloroplast. Binds to 23S rRNA. This Nicotiana tomentosiformis (Tobacco) protein is Large ribosomal subunit protein uL14c.